Here is a 152-residue protein sequence, read N- to C-terminus: Ribonuclease pancreatic beta-type (152 aa).

A signal peptide spans 1 to 25; sequence MGLEKSFILFSLLVLVLGWVQPSLG. Over residues 31–45 the composition is skewed to basic and acidic residues; it reads SSADKFKRQHMDPES. A disordered region spans residues 31-53; sequence SSADKFKRQHMDPESPSKSSPTY. 2 residues coordinate substrate: K35 and R38. The active-site Proton acceptor is H40. Cystine bridges form between C54-C112, C68-C123, C86-C138, and C93-C100. Residues 69-73, K94, and R113 contribute to the substrate site; that span reads KPVNT. The active-site Proton donor is H147.

Belongs to the pancreatic ribonuclease family. Monomer.

It localises to the secreted. It carries out the reaction an [RNA] containing cytidine + H2O = an [RNA]-3'-cytidine-3'-phosphate + a 5'-hydroxy-ribonucleotide-3'-[RNA].. It catalyses the reaction an [RNA] containing uridine + H2O = an [RNA]-3'-uridine-3'-phosphate + a 5'-hydroxy-ribonucleotide-3'-[RNA].. In terms of biological role, endonuclease that catalyzes the cleavage of RNA on the 3' side of pyrimidine nucleotides. Acts on single-stranded and double-stranded RNA. The chain is Ribonuclease pancreatic beta-type from Rattus exulans (Polynesian rat).